The primary structure comprises 557 residues: Formate--tetrahydrofolate ligase (557 aa).

65–72 lines the ATP pocket; that stretch reads TPAGEGKT.

The protein belongs to the formate--tetrahydrofolate ligase family.

It catalyses the reaction (6S)-5,6,7,8-tetrahydrofolate + formate + ATP = (6R)-10-formyltetrahydrofolate + ADP + phosphate. It participates in one-carbon metabolism; tetrahydrofolate interconversion. This Zymomonas mobilis subsp. mobilis (strain ATCC 31821 / ZM4 / CP4) protein is Formate--tetrahydrofolate ligase.